Here is a 388-residue protein sequence, read N- to C-terminus: MRYLTAGESHGPGLTTIIEGLPAGMPLLAEDVNKELKRRQGGHGRGARMRIEKDQVQITAGIRHGKTLGAPVAMFVENKDWKHWETVMSIEPVPEKNEKSRRVSRPRPGHADLVGGMKYGHNDMRNVLERSSARETTVRVAAGAVAKKLLHELGIEVAGHVLEIGGTRANLKRDYAVSEIQETSEASPVRCLDEVAAEEMMQKIDDAKKNGDTIGGIVEVVVGGVPAGLGSYVQWDKKLDAKIARAIVSINAFKGAEFGVGFEAARKPGSEVMDEILWSKEDGYTRRTNNLGGFEGGMTNGMPIVVRGVMKPIPTLYKPLQSVDIDSKETFNASVERSDSCAVPAASVVAEAVVAWEVAVAVLEKFDGDRFDTLKKHVEEHRNLTKEF.

The NADP(+) site is built by Arg-39 and Arg-45. The tract at residues 95-118 is disordered; the sequence is EKNEKSRRVSRPRPGHADLVGGMK. FMN contacts are provided by residues 130-132, 251-252, Gly-296, 311-315, and Arg-337; these read RSS, NA, and KPIPT.

This sequence belongs to the chorismate synthase family. Homotetramer. FMNH2 is required as a cofactor.

It catalyses the reaction 5-O-(1-carboxyvinyl)-3-phosphoshikimate = chorismate + phosphate. The protein operates within metabolic intermediate biosynthesis; chorismate biosynthesis; chorismate from D-erythrose 4-phosphate and phosphoenolpyruvate: step 7/7. Functionally, catalyzes the anti-1,4-elimination of the C-3 phosphate and the C-6 proR hydrogen from 5-enolpyruvylshikimate-3-phosphate (EPSP) to yield chorismate, which is the branch point compound that serves as the starting substrate for the three terminal pathways of aromatic amino acid biosynthesis. This reaction introduces a second double bond into the aromatic ring system. In Listeria innocua serovar 6a (strain ATCC BAA-680 / CLIP 11262), this protein is Chorismate synthase.